A 165-amino-acid chain; its full sequence is Chaperone protein SicA (165 aa).

The protein belongs to the LcrH/SycD chaperone family. As to quaternary structure, dimer or higher-order oligomers.

Its subcellular location is the cytoplasm. Its function is as follows. Type III secretion-associated chaperone required for SipB and SipC stabilization. Prevents premature association of SipB with SipC, which may lead to their targeting for degradation. Along with InvF, required for transcription activation of sigDE (sopB pipC), sicAsipBCDA, and sopE. The sequence is that of Chaperone protein SicA (sicA) from Salmonella dublin.